The chain runs to 432 residues: Phosphomethylpyrimidine synthase (432 aa).

Residues Asn66, Met95, Tyr124, His163, 185 to 187 (SRG), 226 to 229 (DGMR), and Glu265 contribute to the substrate site. His269 contacts Zn(2+). Tyr292 serves as a coordination point for substrate. His333 is a Zn(2+) binding site. 3 residues coordinate [4Fe-4S] cluster: Cys409, Cys412, and Cys416.

This sequence belongs to the ThiC family. Requires [4Fe-4S] cluster as cofactor.

It catalyses the reaction 5-amino-1-(5-phospho-beta-D-ribosyl)imidazole + S-adenosyl-L-methionine = 4-amino-2-methyl-5-(phosphooxymethyl)pyrimidine + CO + 5'-deoxyadenosine + formate + L-methionine + 3 H(+). Its pathway is cofactor biosynthesis; thiamine diphosphate biosynthesis. In terms of biological role, catalyzes the synthesis of the hydroxymethylpyrimidine phosphate (HMP-P) moiety of thiamine from aminoimidazole ribotide (AIR) in a radical S-adenosyl-L-methionine (SAM)-dependent reaction. This is Phosphomethylpyrimidine synthase from Desulforudis audaxviator (strain MP104C).